A 205-amino-acid chain; its full sequence is Potassium-transporting ATPase KdpC subunit (205 aa).

A helical transmembrane segment spans residues Pro7–Met27.

This sequence belongs to the KdpC family. The system is composed of three essential subunits: KdpA, KdpB and KdpC.

The protein localises to the cell inner membrane. Functionally, part of the high-affinity ATP-driven potassium transport (or Kdp) system, which catalyzes the hydrolysis of ATP coupled with the electrogenic transport of potassium into the cytoplasm. This subunit acts as a catalytic chaperone that increases the ATP-binding affinity of the ATP-hydrolyzing subunit KdpB by the formation of a transient KdpB/KdpC/ATP ternary complex. This chain is Potassium-transporting ATPase KdpC subunit, found in Nitrobacter hamburgensis (strain DSM 10229 / NCIMB 13809 / X14).